Reading from the N-terminus, the 544-residue chain is Chaperonin GroEL 3 (544 aa).

ATP contacts are provided by residues 30–33, Lys51, 87–91, Gly415, and Asp496; these read TLGP and DGTTT.

The protein belongs to the chaperonin (HSP60) family. In terms of assembly, forms a cylinder of 14 subunits composed of two heptameric rings stacked back-to-back. Interacts with the co-chaperonin GroES.

The protein resides in the cytoplasm. The catalysed reaction is ATP + H2O + a folded polypeptide = ADP + phosphate + an unfolded polypeptide.. Functionally, together with its co-chaperonin GroES, plays an essential role in assisting protein folding. The GroEL-GroES system forms a nano-cage that allows encapsulation of the non-native substrate proteins and provides a physical environment optimized to promote and accelerate protein folding. The protein is Chaperonin GroEL 3 of Rhizobium etli (strain ATCC 51251 / DSM 11541 / JCM 21823 / NBRC 15573 / CFN 42).